The sequence spans 861 residues: DNA mismatch repair protein MutS (861 aa).

ATP is bound at residue 613-620 (GPNMGGKS).

It belongs to the DNA mismatch repair MutS family.

This protein is involved in the repair of mismatches in DNA. It is possible that it carries out the mismatch recognition step. This protein has a weak ATPase activity. The polypeptide is DNA mismatch repair protein MutS (Dichelobacter nodosus (strain VCS1703A)).